Reading from the N-terminus, the 328-residue chain is Putative lipase LIH1 (328 aa).

Catalysis depends on S181, which acts as the Nucleophile. Residues D253 and H315 each act as charge relay system in the active site.

The protein belongs to the AB hydrolase superfamily. Lipase family.

The catalysed reaction is a triacylglycerol + H2O = a diacylglycerol + a fatty acid + H(+). Lipases catalyze the hydrolysis of the ester bond of tri-, di- and monoglycerides of long-chain fatty acids into fatty acids and glycerol. The chain is Putative lipase LIH1 from Saccharomyces cerevisiae (strain ATCC 204508 / S288c) (Baker's yeast).